The following is a 262-amino-acid chain: LOB domain-containing protein 18 (262 aa).

The LOB domain occupies 36-138 (GPCGACKFLR…AEVSYLQAHL (103 aa)). Residues 223–262 (VGLGGENSHDLQALAHELLHRQGSPPPAATDHSPSRTMSR) are disordered.

This sequence belongs to the LOB domain-containing protein family. Homodimer and heterodimer with LBD16. Interacts with GIP1. Expressed in roots, stems, leaves and flowers. Expressed in vascular tissues of hypocotyls, leaves, roots, developing floral organs and siliques.

The protein resides in the nucleus. Its function is as follows. Involved in the positive regulation of tracheary element (TE) differentiation. Involved in a positive feedback loop that maintains or promotes NAC030/VND7 expression that regulates TE differentiation-related genes. Functions in the initiation and emergence of lateral roots, in conjunction with LBD16, downstream of ARF7 and ARF19. Transcriptional activator that directly regulates EXPA14, a gene encoding a cell wall-loosening factor that promotes lateral root emergence. Activates EXPA14 by directly binding to a specific region of its promoter. Transcriptional activator that directly regulates EXPA17, a gene encoding a cell wall-loosening factor that promotes lateral root emergence. Acts downstream of the auxin influx carriers AUX1 and LAX1 in the regulation of lateral root initiation and development. This Arabidopsis thaliana (Mouse-ear cress) protein is LOB domain-containing protein 18 (LBD18).